We begin with the raw amino-acid sequence, 238 residues long: 4-hydroxy-tetrahydrodipicolinate reductase (238 aa).

12–17 provides a ligand contact to NAD(+); the sequence is GASGRM. Residue R40 coordinates NADP(+). NAD(+) contacts are provided by residues 93 to 95 and 117 to 120; these read GTT and ASNF. The Proton donor/acceptor role is filled by H149. (S)-2,3,4,5-tetrahydrodipicolinate is bound at residue H150. The active-site Proton donor is K153. A (S)-2,3,4,5-tetrahydrodipicolinate-binding site is contributed by 159-160; that stretch reads GT.

Belongs to the DapB family.

The protein resides in the cytoplasm. The catalysed reaction is (S)-2,3,4,5-tetrahydrodipicolinate + NAD(+) + H2O = (2S,4S)-4-hydroxy-2,3,4,5-tetrahydrodipicolinate + NADH + H(+). The enzyme catalyses (S)-2,3,4,5-tetrahydrodipicolinate + NADP(+) + H2O = (2S,4S)-4-hydroxy-2,3,4,5-tetrahydrodipicolinate + NADPH + H(+). The protein operates within amino-acid biosynthesis; L-lysine biosynthesis via DAP pathway; (S)-tetrahydrodipicolinate from L-aspartate: step 4/4. Functionally, catalyzes the conversion of 4-hydroxy-tetrahydrodipicolinate (HTPA) to tetrahydrodipicolinate. In Xanthomonas euvesicatoria pv. vesicatoria (strain 85-10) (Xanthomonas campestris pv. vesicatoria), this protein is 4-hydroxy-tetrahydrodipicolinate reductase.